Here is a 182-residue protein sequence, read N- to C-terminus: Adenylate kinase (182 aa).

12–17 (GAGKGT) is an ATP binding site. Residues 32–61 (STGDLLRDEVSSGSVLGIKAAEIMNKGELV) form an NMP region. Residues Thr33, Arg38, 59–61 (ELV), 85–88 (GFPR), and Gln92 each bind AMP. The interval 126 to 132 (ERGRQDD) is LID. Arg127 contacts ATP. Residues Arg129 and Arg140 each coordinate AMP. Residue Ala168 coordinates ATP.

This sequence belongs to the adenylate kinase family. In terms of assembly, monomer.

The protein resides in the cytoplasm. It catalyses the reaction AMP + ATP = 2 ADP. Its pathway is purine metabolism; AMP biosynthesis via salvage pathway; AMP from ADP: step 1/1. Catalyzes the reversible transfer of the terminal phosphate group between ATP and AMP. Plays an important role in cellular energy homeostasis and in adenine nucleotide metabolism. In Prochlorococcus marinus (strain NATL2A), this protein is Adenylate kinase.